We begin with the raw amino-acid sequence, 488 residues long: Beta-amylase (488 aa).

Residues Asp-51, His-91, and Asp-99 each contribute to the substrate site. The Proton donor role is filled by Glu-184. Substrate contacts are provided by Lys-293, His-298, and Thr-340. Glu-378 serves as the catalytic Proton acceptor. Residues 379 to 380 (NA) and Arg-418 each bind substrate.

This sequence belongs to the glycosyl hydrolase 14 family.

It carries out the reaction Hydrolysis of (1-&gt;4)-alpha-D-glucosidic linkages in polysaccharides so as to remove successive maltose units from the non-reducing ends of the chains.. The polypeptide is Beta-amylase (BMY1) (Zea mays (Maize)).